Reading from the N-terminus, the 415-residue chain is Serine hydroxymethyltransferase (415 aa).

(6S)-5,6,7,8-tetrahydrofolate is bound by residues L119 and 123 to 125 (GHL). At K228 the chain carries N6-(pyridoxal phosphate)lysine. 353–355 (SAF) is a binding site for (6S)-5,6,7,8-tetrahydrofolate.

The protein belongs to the SHMT family. Homodimer. Pyridoxal 5'-phosphate is required as a cofactor.

The protein localises to the cytoplasm. It catalyses the reaction (6R)-5,10-methylene-5,6,7,8-tetrahydrofolate + glycine + H2O = (6S)-5,6,7,8-tetrahydrofolate + L-serine. Its pathway is one-carbon metabolism; tetrahydrofolate interconversion. It functions in the pathway amino-acid biosynthesis; glycine biosynthesis; glycine from L-serine: step 1/1. Catalyzes the reversible interconversion of serine and glycine with tetrahydrofolate (THF) serving as the one-carbon carrier. Also exhibits THF-independent aldolase activity toward beta-hydroxyamino acids, producing glycine and aldehydes, via a retro-aldol mechanism. The sequence is that of Serine hydroxymethyltransferase from Haloarcula marismortui (strain ATCC 43049 / DSM 3752 / JCM 8966 / VKM B-1809) (Halobacterium marismortui).